Here is a 510-residue protein sequence, read N- to C-terminus: Serine/threonine protein phosphatase 2A 59 kDa regulatory subunit B' eta isoform (510 aa).

Positions 1 to 87 are disordered; that stretch reads MWKQILSKLP…NNNNNNNNGV (87 aa). The span at 10–19 shows a compositional bias: basic residues; that stretch reads PNKKSSKHEH. Residues 27–42 are compositionally biased toward low complexity; that stretch reads HSSSSSHTSGASTSKS.

It belongs to the phosphatase 2A regulatory subunit B56 family. As to quaternary structure, PP2A consists of a common heteromeric enzyme, composed of a catalytic subunit (subunits C), a constant regulatory subunit (subunit A), and a variety of regulatory subunits such as subunits B (the R2/B/PR55/B55, R3/B''/PR72/PR130/PR59 and R5/B'/B56 families). Interacts with BZR1. Interacts with BRI1.

The protein localises to the nucleus. It is found in the nucleolus. It localises to the cytoplasm. In terms of biological role, the B regulatory subunit may modulate substrate selectivity and catalytic activity, and may also direct the localization of the catalytic enzyme to a particular subcellular compartment. The holoenzyme composed of PP2AA1, PP2A4 and B'ETA acts as negative regulator of plant innate immunity by controlling BAK1 phosphorylation state and activation in surface-localized immune receptor complexes. Required for the formation of the PP2A holoenzyme that negatively regulates brassinosteroid signaling by dephosphorylating and inactivating BRI1 in the cytoplasm. The protein is Serine/threonine protein phosphatase 2A 59 kDa regulatory subunit B' eta isoform (B'ETA) of Arabidopsis thaliana (Mouse-ear cress).